We begin with the raw amino-acid sequence, 621 residues long: Probable potassium transport system protein Kup 2 (621 aa).

Helical transmembrane passes span 9-29 (MAGL…TSPL), 48-68 (IFGI…VKYV), 101-121 (IVLL…ITPA), 136-156 (SGME…LFLL), 164-184 (VGLM…ILGL), 210-230 (GFHA…AEAL), 246-266 (WFSL…ALLM), 275-295 (PFFL…ATLA), 336-356 (IYMP…VLTF), 364-384 (AAYG…FFVV), 393-413 (LPLA…FFAA), and 418-438 (VADG…LMST).

Belongs to the HAK/KUP transporter (TC 2.A.72) family.

It is found in the cell inner membrane. The enzyme catalyses K(+)(in) + H(+)(in) = K(+)(out) + H(+)(out). In terms of biological role, transport of potassium into the cell. Likely operates as a K(+):H(+) symporter. The sequence is that of Probable potassium transport system protein Kup 2 from Chromobacterium violaceum (strain ATCC 12472 / DSM 30191 / JCM 1249 / CCUG 213 / NBRC 12614 / NCIMB 9131 / NCTC 9757 / MK).